Reading from the N-terminus, the 671-residue chain is DNA ligase (671 aa).

NAD(+) contacts are provided by residues 31–35 (DAEYD), 80–81 (SL), and E110. K112 (N6-AMP-lysine intermediate) is an active-site residue. 4 residues coordinate NAD(+): R133, E167, K283, and K307. Positions 401, 404, 419, and 424 each coordinate Zn(2+). The BRCT domain occupies 587–671 (EEELVFAGKT…YLPDEGGLNE (85 aa)).

This sequence belongs to the NAD-dependent DNA ligase family. LigA subfamily. The cofactor is Mg(2+). Mn(2+) serves as cofactor.

The catalysed reaction is NAD(+) + (deoxyribonucleotide)n-3'-hydroxyl + 5'-phospho-(deoxyribonucleotide)m = (deoxyribonucleotide)n+m + AMP + beta-nicotinamide D-nucleotide.. DNA ligase that catalyzes the formation of phosphodiester linkages between 5'-phosphoryl and 3'-hydroxyl groups in double-stranded DNA using NAD as a coenzyme and as the energy source for the reaction. It is essential for DNA replication and repair of damaged DNA. The protein is DNA ligase of Listeria monocytogenes serotype 4a (strain HCC23).